Reading from the N-terminus, the 77-residue chain is Translation initiation factor IF-1, chloroplastic (77 aa).

Positions 1–72 constitute an S1-like domain; the sequence is MNKQGLFQME…TKGRIVYRQR (72 aa).

It belongs to the IF-1 family. Component of the 30S ribosomal translation pre-initiation complex which assembles on the 30S ribosome in the order IF-2 and IF-3, IF-1 and N-formylmethionyl-tRNA(fMet); mRNA recruitment can occur at any time during PIC assembly.

It is found in the plastid. Its subcellular location is the chloroplast. In terms of biological role, one of the essential components for the initiation of protein synthesis. Stabilizes the binding of IF-2 and IF-3 on the 30S subunit to which N-formylmethionyl-tRNA(fMet) subsequently binds. Helps modulate mRNA selection, yielding the 30S pre-initiation complex (PIC). Upon addition of the 50S ribosomal subunit IF-1, IF-2 and IF-3 are released leaving the mature 70S translation initiation complex. The protein is Translation initiation factor IF-1, chloroplastic of Nephroselmis olivacea (Green alga).